The following is a 630-amino-acid chain: Threonine--tRNA ligase (630 aa).

The interval 1–137 is editing domain; that stretch reads MKVLLIHSDY…PLSELSRKIT (137 aa). Residues 207-506 form a catalytic region; sequence PHVKFITEKE…ADAGAPPMLP (300 aa). Residues C299, H351, and H475 each contribute to the Zn(2+) site.

This sequence belongs to the class-II aminoacyl-tRNA synthetase family. In terms of assembly, homodimer. Zn(2+) is required as a cofactor.

It is found in the cytoplasm. The enzyme catalyses tRNA(Thr) + L-threonine + ATP = L-threonyl-tRNA(Thr) + AMP + diphosphate + H(+). Catalyzes the attachment of threonine to tRNA(Thr) in a two-step reaction: L-threonine is first activated by ATP to form Thr-AMP and then transferred to the acceptor end of tRNA(Thr). Also edits incorrectly charged L-seryl-tRNA(Thr). This chain is Threonine--tRNA ligase, found in Methanococcus aeolicus (strain ATCC BAA-1280 / DSM 17508 / OCM 812 / Nankai-3).